A 419-amino-acid polypeptide reads, in one-letter code: S-adenosylmethionine synthase (419 aa).

His14 contacts ATP. Asp16 contributes to the Mg(2+) binding site. Residue Glu42 coordinates K(+). 2 residues coordinate L-methionine: Glu55 and Gln98. A flexible loop region spans residues 98-108; it reads QSADINQGVDR. Residues 164–166, 242–243, Asp251, 257–258, Ala274, and Lys278 contribute to the ATP site; these read DAK, KF, and RK. Position 251 (Asp251) interacts with L-methionine. An L-methionine-binding site is contributed by Lys282.

It belongs to the AdoMet synthase family. In terms of assembly, homotetramer; dimer of dimers. Mg(2+) is required as a cofactor. K(+) serves as cofactor.

The protein resides in the cytoplasm. The catalysed reaction is L-methionine + ATP + H2O = S-adenosyl-L-methionine + phosphate + diphosphate. It participates in amino-acid biosynthesis; S-adenosyl-L-methionine biosynthesis; S-adenosyl-L-methionine from L-methionine: step 1/1. Catalyzes the formation of S-adenosylmethionine (AdoMet) from methionine and ATP. The overall synthetic reaction is composed of two sequential steps, AdoMet formation and the subsequent tripolyphosphate hydrolysis which occurs prior to release of AdoMet from the enzyme. This is S-adenosylmethionine synthase from Cytophaga hutchinsonii (strain ATCC 33406 / DSM 1761 / CIP 103989 / NBRC 15051 / NCIMB 9469 / D465).